The chain runs to 191 residues: MQTIKCVVVGDGAVGKTCLLISYTTSKFPADYVPTVFDNYAVTVMIGDEPFTLGLFDTAGQEDYDRLRPLSYPSTDVFLVCFSVISPASFENVKEKWFPEVHHHCPGVPIIIVGTQTDLRNDDVILQRLHRQKLSPITQEQGEKLAKELRAVKYVECSALTQRGLKTVFDEAIVAALEPPVIKKSKKCTIL.

Residue G10–T17 coordinates GTP. An Effector region motif is present at residues Y32–Y40. GTP-binding positions include D57–Q61 and T115–D118. Residue C188 is modified to Cysteine methyl ester. A lipid anchor (S-geranylgeranyl cysteine) is attached at C188. The propeptide at T189–L191 is removed in mature form.

The protein belongs to the small GTPase superfamily. Rho family. CDC42 subfamily.

Its subcellular location is the cell membrane. Functionally, involved in hyphal formation, virulence, morphogenesis. This chain is Cell division control protein 42 homolog (CDC42), found in Candida albicans (strain SC5314 / ATCC MYA-2876) (Yeast).